The primary structure comprises 327 residues: Probable cell division protein WhiA (327 aa).

Residues 275 to 308 (SLEELGRLADPQMTKDAVAGRIRRLLTMADKRAE) constitute a DNA-binding region (H-T-H motif).

This sequence belongs to the WhiA family.

Functionally, involved in cell division and chromosome segregation. This chain is Probable cell division protein WhiA, found in Corynebacterium glutamicum (strain ATCC 13032 / DSM 20300 / JCM 1318 / BCRC 11384 / CCUG 27702 / LMG 3730 / NBRC 12168 / NCIMB 10025 / NRRL B-2784 / 534).